The sequence spans 116 residues: MNNARLYQVLKGPVFSEKSQLLGDSLGVQVFKVDNNATKREIKKAVELMFEGVEVTKVNTLNVKGKTKRFGRTVGRRNDYKKAYVTLKAGQDVQMADAGEEIADNAASTSETANNE.

It belongs to the universal ribosomal protein uL23 family. In terms of assembly, part of the 50S ribosomal subunit. Contacts protein L29, and trigger factor when it is bound to the ribosome.

In terms of biological role, one of the early assembly proteins it binds 23S rRNA. One of the proteins that surrounds the polypeptide exit tunnel on the outside of the ribosome. Forms the main docking site for trigger factor binding to the ribosome. This Psychrobacter sp. (strain PRwf-1) protein is Large ribosomal subunit protein uL23.